The primary structure comprises 469 residues: Trehalose-6-phosphate synthase (469 aa).

Arg10 contacts D-glucose 6-phosphate. Residue 22-23 participates in UDP-alpha-D-glucose binding; sequence GG. D-glucose 6-phosphate contacts are provided by Tyr77 and Asp131. 2 residues coordinate UDP-alpha-D-glucose: Arg262 and Lys267. Arg300 provides a ligand contact to D-glucose 6-phosphate. Residue 365–369 coordinates UDP-alpha-D-glucose; sequence LVAKE.

It belongs to the glycosyltransferase 20 family. In terms of assembly, homotetramer.

The catalysed reaction is D-glucose 6-phosphate + UDP-alpha-D-glucose = alpha,alpha-trehalose 6-phosphate + UDP + H(+). The protein operates within glycan biosynthesis; trehalose biosynthesis. In terms of biological role, probably involved in the osmoprotection via the biosynthesis of trehalose. Catalyzes the transfer of glucose from UDP-alpha-D-glucose (UDP-Glc) to D-glucose 6-phosphate (Glc-6-P) to form trehalose-6-phosphate. Acts with retention of the anomeric configuration of the UDP-sugar donor. The protein is Trehalose-6-phosphate synthase of Sodalis glossinidius (strain morsitans).